Here is a 282-residue protein sequence, read N- to C-terminus: 2-dehydro-3-deoxyphosphooctonate aldolase (282 aa).

The protein belongs to the KdsA family.

It localises to the cytoplasm. It carries out the reaction D-arabinose 5-phosphate + phosphoenolpyruvate + H2O = 3-deoxy-alpha-D-manno-2-octulosonate-8-phosphate + phosphate. It functions in the pathway carbohydrate biosynthesis; 3-deoxy-D-manno-octulosonate biosynthesis; 3-deoxy-D-manno-octulosonate from D-ribulose 5-phosphate: step 2/3. Its pathway is bacterial outer membrane biogenesis; lipopolysaccharide biosynthesis. The sequence is that of 2-dehydro-3-deoxyphosphooctonate aldolase from Shewanella sp. (strain ANA-3).